Consider the following 275-residue polypeptide: Rhamnulose-1-phosphate aldolase (275 aa).

Glutamate 117 is an active-site residue. Zn(2+) is bound by residues histidine 141, histidine 143, and histidine 212.

It belongs to the aldolase class II family. RhaD subfamily. As to quaternary structure, homotetramer. It depends on Zn(2+) as a cofactor.

The protein localises to the cytoplasm. The catalysed reaction is L-rhamnulose 1-phosphate = (S)-lactaldehyde + dihydroxyacetone phosphate. The protein operates within carbohydrate degradation; L-rhamnose degradation; glycerone phosphate from L-rhamnose: step 3/3. In terms of biological role, catalyzes the reversible cleavage of L-rhamnulose-1-phosphate to dihydroxyacetone phosphate (DHAP) and L-lactaldehyde. This Salmonella choleraesuis (strain SC-B67) protein is Rhamnulose-1-phosphate aldolase.